The sequence spans 2185 residues: Genome polyprotein (2185 aa).

A lipid anchor (N-myristoyl glycine; by host) is attached at glycine 2. The Cytoplasmic portion of the chain corresponds to 2–1495 (GAQVSTQKTG…HVSRAFICLQ (1494 aa)). The segment at 568 to 584 (FFQGPVEDAITAAIGRV) is amphipathic alpha-helix. Catalysis depends on for protease 2A activity residues histidine 872 and aspartate 890. Zn(2+)-binding residues include cysteine 907 and cysteine 909. The active-site For protease 2A activity is cysteine 961. 2 residues coordinate Zn(2+): cysteine 967 and histidine 969. The interval 1101-1173 (NNGWLKKFTE…EQSAPSQSDQ (73 aa)) is membrane-binding. The tract at residues 1101 to 1239 (NNGWLKKFTE…SPGAGKSVAT (139 aa)) is oligomerization. The tract at residues 1122–1126 (AIKIQ) is RNA-binding. The region spanning 1205 to 1361 (EKKMSNYIQF…SMYSQNGKIN (157 aa)) is the SF3 helicase domain. 3 residues coordinate Zn(2+): cysteine 1369, cysteine 1381, and cysteine 1386. The C4-type; degenerate zinc finger occupies 1369 to 1386 (CDEECCPVNFKKCCPLVC). The interval 1413 to 1420 (EYNHRHSV) is RNA-binding. The interval 1424–1429 (LEALFQ) is oligomerization. The stretch at 1496–1511 (AITTFVSVAGIIYIIY) is an intramembrane region. The Cytoplasmic segment spans residues 1512–2185 (KLFAGFQGAY…TIRRKWLDSF (674 aa)). The residue at position 1521 (tyrosine 1521) is an O-(5'-phospho-RNA)-tyrosine. Residues 1541–1719 (GPAFEFAVAM…FSAALLKHYF (179 aa)) enclose the Peptidase C3 domain. Catalysis depends on for protease 3C activity residues histidine 1580, glutamate 1611, and cysteine 1687. One can recognise a RdRp catalytic domain in the interval 1950 to 2066 (GHLIAFDYSG…SYPWPIDASL (117 aa)). Positions 1956 and 2052 each coordinate Mg(2+).

Belongs to the picornaviruses polyprotein family. Interacts with capsid protein VP1 and capsid protein VP3 to form heterotrimeric protomers. As to quaternary structure, interacts with capsid protein VP0, and capsid protein VP3 to form heterotrimeric protomers. Five protomers subsequently associate to form pentamers which serve as building blocks for the capsid. Interacts with capsid protein VP2, capsid protein VP3 and capsid protein VP4 following cleavage of capsid protein VP0. Interacts with host CD55. Interacts with host CXADR. In terms of assembly, interacts with capsid protein VP1 and capsid protein VP3 in the mature capsid. Interacts with capsid protein VP0 and capsid protein VP1 to form heterotrimeric protomers. Five protomers subsequently associate to form pentamers which serve as building blocks for the capsid. Interacts with capsid protein VP4 in the mature capsid. Interacts with protein 2C; this interaction may be important for virion morphogenesis. As to quaternary structure, interacts with capsid protein VP1 and capsid protein VP3. In terms of assembly, homodimer. Homohexamer; forms a hexameric ring structure with 6-fold symmetry characteristic of AAA+ ATPases. Interacts (via N-terminus) with host RTN3 (via reticulon domain); this interaction is important for viral replication. Interacts with capsid protein VP3; this interaction may be important for virion morphogenesis. As to quaternary structure, interacts with protein 3CD. In terms of assembly, homodimer. Interacts with host GBF1. Interacts (via GOLD domain) with host ACBD3 (via GOLD domain); this interaction allows the formation of a viral protein 3A/ACBD3 heterotetramer with a 2:2 stoichiometry, which will stimulate the recruitment of host PI4KB in order to synthesize PI4P at the viral RNA replication sites. Interacts with RNA-directed RNA polymerase. As to quaternary structure, interacts with host TICAM1 (via C-terminus). In terms of assembly, interacts with protein 3AB and with RNA-directed RNA polymerase. Interacts with Viral protein genome-linked and with protein 3CD. Requires Mg(2+) as cofactor. In terms of processing, specific enzymatic cleavages in vivo by the viral proteases yield processing intermediates and the mature proteins. Myristoylation is required for the formation of pentamers during virus assembly. Further assembly of 12 pentamers and a molecule of genomic RNA generates the provirion. Post-translationally, during virion maturation, immature virions are rendered infectious following cleavage of VP0 into VP4 and VP2. This maturation seems to be an autocatalytic event triggered by the presence of RNA in the capsid and it is followed by a conformational change infectious virion. In terms of processing, myristoylation is required during RNA encapsidation and formation of the mature virus particle. VPg is uridylylated by the polymerase into VPg-pUpU. This acts as a nucleotide-peptide primer for the genomic RNA replication.

It is found in the virion. It localises to the host cytoplasm. The protein localises to the host cytoplasmic vesicle membrane. The protein resides in the host nucleus. The enzyme catalyses a ribonucleoside 5'-triphosphate + H2O = a ribonucleoside 5'-diphosphate + phosphate + H(+). It catalyses the reaction Selective cleavage of Tyr-|-Gly bond in the picornavirus polyprotein.. The catalysed reaction is RNA(n) + a ribonucleoside 5'-triphosphate = RNA(n+1) + diphosphate. It carries out the reaction Selective cleavage of Gln-|-Gly bond in the poliovirus polyprotein. In other picornavirus reactions Glu may be substituted for Gln, and Ser or Thr for Gly.. With respect to regulation, replication or transcription is subject to high level of random mutations by the nucleotide analog ribavirin. Its function is as follows. Forms an icosahedral capsid of pseudo T=3 symmetry with capsid proteins VP2 and VP3. The capsid is 300 Angstroms in diameter, composed of 60 copies of each capsid protein and enclosing the viral positive strand RNA genome. Capsid protein VP1 mainly forms the vertices of the capsid. Capsid protein VP1 interacts with host cell receptors CD55 and CXADR to provide virion attachment to target host cells. This attachment induces virion internalization. Tyrosine kinases are probably involved in the entry process. After binding to its receptor, the capsid undergoes conformational changes. Capsid protein VP1 N-terminus (that contains an amphipathic alpha-helix) and capsid protein VP4 are externalized. Together, they shape a pore in the host membrane through which viral genome is translocated to host cell cytoplasm. Forms an icosahedral capsid of pseudo T=3 symmetry with capsid proteins VP2 and VP3. The capsid is 300 Angstroms in diameter, composed of 60 copies of each capsid protein and enclosing the viral positive strand RNA genome. Functionally, lies on the inner surface of the capsid shell. After binding to the host receptor, the capsid undergoes conformational changes. Capsid protein VP4 is released, Capsid protein VP1 N-terminus is externalized, and together, they shape a pore in the host membrane through which the viral genome is translocated into the host cell cytoplasm. In terms of biological role, component of immature procapsids, which is cleaved into capsid proteins VP4 and VP2 after maturation. Allows the capsid to remain inactive before the maturation step. Its function is as follows. Cysteine protease that cleaves viral polyprotein and specific host proteins. It is responsible for the autocatalytic cleavage between the P1 and P2 regions, which is the first cleavage occurring in the polyprotein. Also cleaves the host translation initiation factor EIF4G1, in order to shut down the capped cellular mRNA translation. Inhibits the host nucleus-cytoplasm protein and RNA trafficking by cleaving host members of the nuclear pores. Counteracts stress granule formation probably by antagonizing its assembly or promoting its dissassembly. Cleaves and inhibits host IFIH1/MDA5, thereby inhibiting the type-I IFN production and the establishment of the antiviral state. Cleaves and inhibits host MAVS, thereby inhibiting the type-I IFN production and the establishment of the antiviral state. Plays an essential role in the virus replication cycle by acting as a viroporin. Creates a pore in the host endoplasmic reticulum and as a consequence releases Ca2+ in the cytoplasm of infected cell. In turn, high levels of cytoplasmic calcium may trigger membrane trafficking and transport of viral ER-associated proteins to viroplasms, sites of viral genome replication. Functionally, induces and associates with structural rearrangements of intracellular membranes. Displays RNA-binding, nucleotide binding and NTPase activities. May play a role in virion morphogenesis and viral RNA encapsidation by interacting with the capsid protein VP3. In terms of biological role, localizes the viral replication complex to the surface of membranous vesicles. Together with protein 3CD binds the Cis-Active RNA Element (CRE) which is involved in RNA synthesis initiation. Acts as a cofactor to stimulate the activity of 3D polymerase, maybe through a nucleid acid chaperone activity. Its function is as follows. Localizes the viral replication complex to the surface of membranous vesicles. It inhibits host cell endoplasmic reticulum-to-Golgi apparatus transport and causes the disassembly of the Golgi complex, possibly through GBF1 interaction. This would result in depletion of MHC, trail receptors and IFN receptors at the host cell surface. Plays an essential role in viral RNA replication by recruiting ACBD3 and PI4KB at the viral replication sites, thereby allowing the formation of the rearranged membranous structures where viral replication takes place. Acts as a primer for viral RNA replication and remains covalently bound to viral genomic RNA. VPg is uridylylated prior to priming replication into VPg-pUpU. The oriI viral genomic sequence may act as a template for this. The VPg-pUpU is then used as primer on the genomic RNA poly(A) by the RNA-dependent RNA polymerase to replicate the viral genome. During genome replication, the VPg-RNA linkage is removed by the host TDP2, thereby accelerating replication. During the late stage of the replication cycle, host TDP2 is excluded from sites of viral RNA synthesis and encapsidation, allowing for the generation of progeny virions. Functionally, involved in the viral replication complex and viral polypeptide maturation. It exhibits protease activity with a specificity and catalytic efficiency that is different from protease 3C. Protein 3CD lacks polymerase activity. Protein 3CD binds to the 5'UTR of the viral genome. In terms of biological role, major viral protease that mediates proteolytic processing of the polyprotein. Cleaves host EIF5B, contributing to host translation shutoff. Also cleaves host PABPC1, contributing to host translation shutoff. Cleaves and inhibits host RIGI, thereby inhibiting the type-I IFN production and the establishment of the antiviral state. Cleaves and inhibits host MAVS, thereby inhibiting the type-I IFN production and the establishment of the antiviral state. Cleaves and inhibits host TICAM1/TRIF, thereby inhibiting the type-I IFN production. Cleaves host NLRP1, triggers host N-glycine-mediated degradation of the autoinhibitory NLRP1 N-terminal fragment. Its function is as follows. Replicates the viral genomic RNA on the surface of intracellular membranes. May form linear arrays of subunits that propagate along a strong head-to-tail interaction called interface-I. Covalently attaches UMP to a tyrosine of VPg, which is used to prime RNA synthesis. The positive stranded RNA genome is first replicated at virus induced membranous vesicles, creating a dsRNA genomic replication form. This dsRNA is then used as template to synthesize positive stranded RNA genomes. ss(+)RNA genomes are either translated, replicated or encapsidated. The polypeptide is Genome polyprotein (Homo sapiens (Human)).